The sequence spans 950 residues: 2-oxoglutarate dehydrogenase E1 component (950 aa).

The protein belongs to the alpha-ketoglutarate dehydrogenase family. In terms of assembly, homodimer. Part of the 2-oxoglutarate dehydrogenase (OGDH) complex composed of E1 (2-oxoglutarate dehydrogenase), E2 (dihydrolipoamide succinyltransferase) and E3 (dihydrolipoamide dehydrogenase); the complex contains multiple copies of the three enzymatic components (E1, E2 and E3). Thiamine diphosphate is required as a cofactor.

It catalyses the reaction N(6)-[(R)-lipoyl]-L-lysyl-[protein] + 2-oxoglutarate + H(+) = N(6)-[(R)-S(8)-succinyldihydrolipoyl]-L-lysyl-[protein] + CO2. Its function is as follows. E1 component of the 2-oxoglutarate dehydrogenase (OGDH) complex which catalyzes the decarboxylation of 2-oxoglutarate, the first step in the conversion of 2-oxoglutarate to succinyl-CoA and CO(2). This chain is 2-oxoglutarate dehydrogenase E1 component (odhA), found in Cupriavidus necator (strain ATCC 17699 / DSM 428 / KCTC 22496 / NCIMB 10442 / H16 / Stanier 337) (Ralstonia eutropha).